The following is a 119-amino-acid chain: MARVKGGVVSRKRRKRILKLAKGYYGAKHILFRTAKEQVMNSYYYAYRDRRQKKRDFRKLWITRINAAARMNGLSYSQLMHGLKLAEIEVNRKMLADLAVADAAAFTALADAAKAKLGK.

Belongs to the bacterial ribosomal protein bL20 family.

Functionally, binds directly to 23S ribosomal RNA and is necessary for the in vitro assembly process of the 50S ribosomal subunit. It is not involved in the protein synthesizing functions of that subunit. In Streptococcus pyogenes serotype M1, this protein is Large ribosomal subunit protein bL20.